Consider the following 127-residue polypeptide: PRA1 family protein C (127 aa).

The next 3 membrane-spanning stretches (helical) occupy residues 15-35 (IFISMLWQPVHLSVFVILIVA), 53-73 (VIDDSTLVLVLLVLTIGIFLL), and 76-96 (VSRGIVIGVLAGLPVVLVHGM).

It belongs to the PRA1 family.

Its subcellular location is the endoplasmic reticulum membrane. In terms of biological role, may be involved in both secretory and endocytic intracellular trafficking in the endosomal/prevacuolar compartments. This is PRA1 family protein C (PRA1C) from Arabidopsis thaliana (Mouse-ear cress).